A 109-amino-acid chain; its full sequence is Fluoride-specific ion channel FluC 1 (109 aa).

4 helical membrane-spanning segments follow: residues 1-21, 29-49, 55-75, and 87-107; these read MVIV…YFFS, LPLG…VFYN, EVYA…STLN, and VFYS…FLGI. Residues Gly66 and Thr69 each coordinate Na(+).

It belongs to the fluoride channel Fluc/FEX (TC 1.A.43) family.

Its subcellular location is the cell membrane. It catalyses the reaction fluoride(in) = fluoride(out). With respect to regulation, na(+) is not transported, but it plays an essential structural role and its presence is essential for fluoride channel function. Its function is as follows. Fluoride-specific ion channel. Important for reducing fluoride concentration in the cell, thus reducing its toxicity. The protein is Fluoride-specific ion channel FluC 1 of Streptococcus pneumoniae serotype 4 (strain ATCC BAA-334 / TIGR4).